The primary structure comprises 269 residues: 2-dehydro-3-deoxyphosphooctonate aldolase (269 aa).

This sequence belongs to the KdsA family.

Its subcellular location is the cytoplasm. It catalyses the reaction D-arabinose 5-phosphate + phosphoenolpyruvate + H2O = 3-deoxy-alpha-D-manno-2-octulosonate-8-phosphate + phosphate. It participates in carbohydrate biosynthesis; 3-deoxy-D-manno-octulosonate biosynthesis; 3-deoxy-D-manno-octulosonate from D-ribulose 5-phosphate: step 2/3. The protein operates within bacterial outer membrane biogenesis; lipopolysaccharide biosynthesis. The protein is 2-dehydro-3-deoxyphosphooctonate aldolase of Chlamydia trachomatis serovar L2 (strain ATCC VR-902B / DSM 19102 / 434/Bu).